The sequence spans 210 residues: Kalata-B2 (210 aa).

An N-terminal signal peptide occupies residues 1–22 (MAKFTNCLVLSLLLAAFVGAFG). The propeptide occupies 23 to 66 (AEFSEADKATLVNDIAENIQKEILGEVKTSETVLTMFLKEMQLK). Positions 67-95 (GLPVCGETCFGGTCNTPGCSCTWPICTRD) form a cross-link, cyclopeptide (Gly-Asp). 3 cysteine pairs are disulfide-bonded: C71–C85, C75–C87, and C80–C92. The propeptide occupies 96-120 (SLPMRAGGKTSETTLHMFLKEMQLK). The segment at residues 121-149 (GLPVCGETCFGGTCNTPGCSCTWPICTRD) is a cross-link (cyclopeptide (Gly-Asp)). 3 disulfide bridges follow: C125–C139, C129–C141, and C134–C146. Residues 150–174 (SLPMSAGGKTSETTLHMFLKEMQLK) constitute a propeptide that is removed on maturation. Positions 175 to 203 (GLPVCGETCFGGTCNTPGCSCTWPICTRD) form a cross-link, cyclopeptide (Gly-Asp). 3 disulfide bridges follow: C179–C193, C183–C195, and C188–C200. The propeptide occupies 204–210 (SLPLVAA).

This sequence belongs to the cyclotide family. Moebius subfamily. Post-translationally, kalata-B2 is a cyclic peptide which occurs in three forms: with unmodified Trp, with Trp oxidized to form N-formylkynurenine and with Trp oxidized to form kynurenine. Oxidation is enhanced by exposure to sunlight.

Its function is as follows. Probably participates in a plant defense mechanism. Inhibitory effect on the growth and development of larvae from Helicoverpa punctigera. Has hemolytic activity. This is Kalata-B2 (OAK4) from Oldenlandia affinis.